The chain runs to 351 residues: Photosystem II D2 protein (351 aa).

The chain crosses the membrane as a helical span at residues 39-59 (TAYLAIGGWLTGTTFVTSWYT). Position 116 (His-116) interacts with chlorophyll a. A helical membrane pass occupies residues 123 to 139 (GFMLRQFEIARLVGIRP). Residues Gln-128 and Asn-141 each coordinate pheophytin a. A helical membrane pass occupies residues 151–164 (VFVSVFLMYPLGQS). His-196 serves as a coordination point for chlorophyll a. Residues 206–226 (GALLCAIHGATVENTLFEDGE) form a helical membrane-spanning segment. His-213 and Phe-260 together coordinate a plastoquinone. His-213 contacts Fe cation. His-267 is a Fe cation binding site. Residues 277 to 293 (GLWTSSIGIIGLALNLR) traverse the membrane as a helical segment.

This sequence belongs to the reaction center PufL/M/PsbA/D family. As to quaternary structure, PSII is composed of 1 copy each of membrane proteins PsbA, PsbB, PsbC, PsbD, PsbE, PsbF, PsbH, PsbI, PsbJ, PsbK, PsbL, PsbM, PsbT, PsbX, PsbY, PsbZ, Psb30/Ycf12, peripheral proteins PsbO, CyanoQ (PsbQ), PsbU, PsbV and a large number of cofactors. It forms dimeric complexes. The cofactor is The D1/D2 heterodimer binds P680, chlorophylls that are the primary electron donor of PSII, and subsequent electron acceptors. It shares a non-heme iron and each subunit binds pheophytin, quinone, additional chlorophylls, carotenoids and lipids. There is also a Cl(-1) ion associated with D1 and D2, which is required for oxygen evolution. The PSII complex binds additional chlorophylls, carotenoids and specific lipids..

The protein resides in the cellular thylakoid membrane. It catalyses the reaction 2 a plastoquinone + 4 hnu + 2 H2O = 2 a plastoquinol + O2. In terms of biological role, photosystem II (PSII) is a light-driven water:plastoquinone oxidoreductase that uses light energy to abstract electrons from H(2)O, generating O(2) and a proton gradient subsequently used for ATP formation. It consists of a core antenna complex that captures photons, and an electron transfer chain that converts photonic excitation into a charge separation. The D1/D2 (PsbA/PsbD) reaction center heterodimer binds P680, the primary electron donor of PSII as well as several subsequent electron acceptors. D2 is needed for assembly of a stable PSII complex. In Synechococcus sp. (strain CC9605), this protein is Photosystem II D2 protein.